The chain runs to 3712 residues: Laminin subunit alpha (3712 aa).

The N-terminal stretch at 1–22 (MGHGVASIGALLVILAISYCQA) is a signal peptide. The Laminin N-terminal domain occupies 23-272 (ELTPPYFNLA…SIKDISIGGR (250 aa)). Residues Asn116 and Asn219 are each glycosylated (N-linked (GlcNAc...) asparagine). 43 disulfides stabilise this stretch: Cys273–Cys282, Cys275–Cys296, Cys298–Cys307, Cys310–Cys330, Cys333–Cys342, Cys335–Cys367, Cys370–Cys379, Cys382–Cys400, Cys403–Cys414, Cys405–Cys421, Cys423–Cys432, Cys435–Cys445, Cys448–Cys460, Cys450–Cys468, Cys470–Cys479, Cys482–Cys492, Cys495–Cys507, Cys497–Cys514, Cys516–Cys525, Cys528–Cys538, Cys541–Cys553, Cys543–Cys560, Cys562–Cys571, Cys574–Cys584, Cys587–Cys599, Cys589–Cys605, Cys607–Cys616, Cys619–Cys629, Cys632–Cys644, Cys634–Cys650, Cys652–Cys661, Cys664–Cys674, Cys677–Cys691, Cys679–Cys700, Cys702–Cys711, Cys714–Cys729, Cys732–Cys746, Cys734–Cys753, Cys755–Cys764, Cys767–Cys782, Cys785–Cys797, Cys787–Cys804, and Cys806–Cys815. 10 consecutive Laminin EGF-like domains span residues 273–332 (CMCN…NCEP), 333–402 (CNCH…VCSP), 403–447 (CQCD…NCRE), 448–494 (CECN…ECKA), 495–540 (CECN…TCSY), 541–586 (CDCD…DCKP), 587–631 (CNCS…DCLP), 632–676 (CHCD…SCED), 677–731 (CNCD…GCEI), and 732–784 (CDCW…GCKD). An N-linked (GlcNAc...) asparagine glycan is attached at Asn395. Asn453 carries N-linked (GlcNAc...) asparagine glycosylation. N-linked (GlcNAc...) asparagine glycosylation is present at Asn508. Asn588 is a glycosylation site (N-linked (GlcNAc...) asparagine). N-linked (GlcNAc...) asparagine glycosylation is present at Asn722. A Laminin EGF-like 11; truncated domain is found at 785 to 815 (CSCDVGGSWQSVCDKISGQCKCHPRITGLAC). Residues 816-1374 (TQPLTTHFFP…TADYNSGALP (559 aa)) form a domain IV'' region. Asn897 and Asn1352 each carry an N-linked (GlcNAc...) asparagine glycan. Intrachain disulfides connect Cys1375/Cys1387, Cys1377/Cys1394, Cys1396/Cys1405, Cys1408/Cys1418, Cys1421/Cys1429, Cys1423/Cys1436, Cys1438/Cys1447, Cys1450/Cys1463, Cys1466/Cys1480, Cys1468/Cys1487, Cys1489/Cys1498, Cys1501/Cys1511, Cys1514/Cys1526, Cys1516/Cys1533, Cys1535/Cys1544, and Cys1547/Cys1562. Laminin EGF-like domains are found at residues 1375-1420 (CNCD…DCKP), 1421-1465 (CKCP…GCEE), 1466-1513 (CACN…HCEQ), and 1514-1564 (CSCH…GCTT). A glycan (N-linked (GlcNAc...) asparagine) is linked at Asn1484. Residues 1565–1574 (CFCFGKTSRC) form the Laminin EGF-like 16; first part domain. N-linked (GlcNAc...) asparagine glycans are attached at residues Asn1583 and Asn1617. In terms of domain architecture, Laminin IV type A spans 1585-1775 (SLLKHVSITT…GEYQFLAVER (191 aa)). The region spanning 1776–1808 (CSCPPGYSGHSCEDCAPGYYRDPSGPYGGYCIP) is the Laminin EGF-like 16; second part domain. 26 disulfide bridges follow: Cys1778-Cys1787, Cys1790-Cys1806, Cys1809-Cys1818, Cys1811-Cys1825, Cys1828-Cys1837, Cys1840-Cys1856, Cys1859-Cys1874, Cys1861-Cys1885, Cys1887-Cys1896, Cys1899-Cys1914, Cys1917-Cys1931, Cys1919-Cys1938, Cys1941-Cys1950, Cys1953-Cys1967, Cys1970-Cys1980, Cys1972-Cys1987, Cys1989-Cys1998, Cys2001-Cys2014, Cys2017-Cys2028, Cys2019-Cys2035, Cys2037-Cys2046, Cys2049-Cys2061, Cys2064-Cys2076, Cys2066-Cys2083, Cys2085-Cys2094, and Cys2097-Cys2109. 6 Laminin EGF-like domains span residues 1809-1858 (CECN…DCMI), 1859-1916 (CACP…VCKP), 1917-1969 (CECS…NCQS), 1970-2016 (CDCD…GCRA), 2017-2063 (CDCG…GCTP), and 2064-2111 (CNCN…GCQE). Asn1847 carries N-linked (GlcNAc...) asparagine glycosylation. The N-linked (GlcNAc...) asparagine glycan is linked to Asn1943. An N-linked (GlcNAc...) asparagine glycan is attached at Asn2024. The interval 2112-2671 (CNNCHHALLD…EAARQLANSI (560 aa)) is domain II and I. Positions 2178–2249 (KKANSELESD…LSKNLEAAAS (72 aa)) form a coiled coil. 5 N-linked (GlcNAc...) asparagine glycosylation sites follow: Asn2196, Asn2215, Asn2267, Asn2301, and Asn2323. Residues 2301–2321 (NKSLNALKNDIGEFSDHLEDL) adopt a coiled-coil conformation. Residues 2376 to 2450 (DLTLNQINQK…QYTDMTASAE (75 aa)) adopt a coiled-coil conformation. 9 N-linked (GlcNAc...) asparagine glycosylation sites follow: Asn2482, Asn2524, Asn2538, Asn2569, Asn2699, Asn2720, Asn2890, Asn2938, and Asn3010. Residues 2541–2676 (EHQLKDINKL…LANSIKVGVN (136 aa)) adopt a coiled-coil conformation. Laminin G-like domains are found at residues 2672–2868 (KVGV…ERDV), 2876–3048 (VTGL…EEGC), and 3055–3223 (VVSY…INGC). Cys3022 and Cys3048 are disulfide-bonded. N-linked (GlcNAc...) asparagine glycosylation occurs at Asn3070. Cys3196 and Cys3223 are joined by a disulfide. The disordered stretch occupies residues 3244 to 3297 (NEVESPWSNADTLPPLKPDIESTLPPTTPTTTTTTTTTTTSTTTTSTTTTTTTP). The segment covering 3265–3297 (STLPPTTPTTTTTTTTTTTSTTTTSTTTTTTTP) has biased composition (low complexity). 2 consecutive Laminin G-like domains span residues 3349–3528 (GYRF…VVPC) and 3534–3709 (RGLF…QGYC). Asn3491 carries an N-linked (GlcNAc...) asparagine glycan. A disulfide bridge connects residues Cys3505 and Cys3528. N-linked (GlcNAc...) asparagine glycosylation occurs at Asn3612. Cys3682 and Cys3709 form a disulfide bridge.

In terms of assembly, laminin is a complex glycoprotein, consisting of three different polypeptide chains (alpha, beta, gamma), which are bound to each other by disulfide bonds into a cross-shaped molecule comprising one long and three short arms with globules at each end. In terms of tissue distribution, newly formed mesoderm and later prominently expressed in hemocytes, which also synthesize collagen IV. Expressed in muscles.

Its subcellular location is the secreted. It localises to the extracellular space. The protein resides in the extracellular matrix. It is found in the basement membrane. The protein localises to the synapse. Its subcellular location is the cell projection. It localises to the axon. The protein resides in the cytoplasmic vesicle. It is found in the secretory vesicle. The protein localises to the synaptic vesicle. Its function is as follows. Binding to cells via a high affinity receptor, laminin is thought to mediate the attachment, migration and organization of cells into tissues during embryonic development by interacting with other extracellular matrix components. Activates presynaptic signaling involving integrin alpha-PS3/beta-nu and Fak to suppress neuromuscular junction (NMJ) growth during larval development and during low crawling activity, but not during higher-crawling conditions. Mediates, together with integrin alpha-PS3/beta-nu, glutamate receptor-modulated NMJ growth. The sequence is that of Laminin subunit alpha (LanA) from Drosophila melanogaster (Fruit fly).